Reading from the N-terminus, the 181-residue chain is ATP-dependent protease subunit HslV (181 aa).

Residue Thr2 is part of the active site. Residues Gly157, Cys160, and Thr163 each contribute to the Na(+) site.

This sequence belongs to the peptidase T1B family. HslV subfamily. In terms of assembly, a double ring-shaped homohexamer of HslV is capped on each side by a ring-shaped HslU homohexamer. The assembly of the HslU/HslV complex is dependent on binding of ATP.

The protein localises to the cytoplasm. It catalyses the reaction ATP-dependent cleavage of peptide bonds with broad specificity.. Allosterically activated by HslU binding. In terms of biological role, protease subunit of a proteasome-like degradation complex believed to be a general protein degrading machinery. In Hahella chejuensis (strain KCTC 2396), this protein is ATP-dependent protease subunit HslV.